Reading from the N-terminus, the 130-residue chain is MNGTYSYGTGRRKSAVARVFIKPGSGVITVNNKPVDEFFSRETGRMVVRQPLELTGNLDRFDILVNIHGGGESGQAGAVRHGITRALIDFDATLKPVLSNAGLVTRDAREVERKKVGLRKARRRKQFSKR.

It belongs to the universal ribosomal protein uS9 family.

The chain is Small ribosomal subunit protein uS9 from Nitrosospira multiformis (strain ATCC 25196 / NCIMB 11849 / C 71).